Here is a 400-residue protein sequence, read N- to C-terminus: MTLKVCVCGGGNGAHTLSGLAASRDGVEVRVLTLFADEAERWTKALGADELTVIVNEKDGTQTEVKSRPKVITKDPQVAITGADVVILTVPAFAHEGYFQAMAPYVQDSALIVGLPSQAGFEFQCRDILGDKAAAVSMMSFETLPWACRIKEFGRKVEVLGTKSVLAASLIKGTAETVDPLSTLQKLHGAEPVFRLAKHFLEMLIMSYSFVHPAILYGRWGSWDGNPVSEAPLFYQGIDQATADMLTACSDECKAVGNAIMAACPGNDLSDVKDIYQWYLEYYHEDIQDDHDLYHAITTNKSYKGLVHPVKTVDGGVAPDFGNRYLTEDIPMGMIVFKGVAIAAGVPIPNNDKLITWAQEKIGKVYLVDGALTGKDVATTRCPQRYGFNTLNAILTGKKE.

Residues 10-13 (GGNG) and 35-38 (FADE) contribute to the NADH site. The pyruvate site is built by Q118 and T143. Q118 is a binding site for substrate. C148 is an NAD(+) binding site. M206 contacts L-arginine. Residue H212 coordinates pyruvate. Residue H212 is part of the active site. R324 serves as a coordination point for NAD(+).

This sequence belongs to the lysopine/nopaline/octopine/opine/vitopine dehydrogenases family.

The catalysed reaction is D-octopine + NAD(+) + H2O = L-arginine + pyruvate + NADH + H(+). In terms of biological role, catalyzes the reverse reaction of octopine dehydrogenation. Acts on L-arginine in preference to other substrates. The polypeptide is Octopine dehydrogenase (Mizuhopecten yessoensis (Japanese scallop)).